Here is a 485-residue protein sequence, read N- to C-terminus: Rhamnulokinase (485 aa).

8-12 (ASSGR) contributes to the ATP binding site. Substrate is bound by residues Gly78 and 231 to 233 (HDT). The Proton acceptor role is filled by Asp232. An ATP-binding site is contributed by Thr254. Residue Asn291 coordinates substrate. Gln299 serves as a coordination point for ATP. Cysteines 348 and 365 form a disulfide. Gly397 provides a ligand contact to ATP. An intrachain disulfide couples Cys408 to Cys412.

This sequence belongs to the rhamnulokinase family. Mg(2+) serves as cofactor.

The enzyme catalyses L-rhamnulose + ATP = L-rhamnulose 1-phosphate + ADP + H(+). It functions in the pathway carbohydrate degradation; L-rhamnose degradation; glycerone phosphate from L-rhamnose: step 2/3. Its function is as follows. Involved in the catabolism of L-rhamnose (6-deoxy-L-mannose). Catalyzes the transfer of the gamma-phosphate group from ATP to the 1-hydroxyl group of L-rhamnulose to yield L-rhamnulose 1-phosphate. The protein is Rhamnulokinase of Yersinia pestis bv. Antiqua (strain Antiqua).